A 39-amino-acid chain; its full sequence is Photosystem II reaction center protein L (39 aa).

Residues 18–38 (SLYLGLLLVFVTGVLFSSYFF) traverse the membrane as a helical segment.

The protein belongs to the PsbL family. In terms of assembly, PSII is composed of 1 copy each of membrane proteins PsbA, PsbB, PsbC, PsbD, PsbE, PsbF, PsbH, PsbI, PsbJ, PsbK, PsbL, PsbM, PsbT, PsbX, PsbY, PsbZ, Psb30/Ycf12, peripheral proteins PsbO, CyanoQ (PsbQ), PsbU, PsbV and a large number of cofactors. It forms dimeric complexes.

It localises to the cellular thylakoid membrane. Its function is as follows. One of the components of the core complex of photosystem II (PSII). PSII is a light-driven water:plastoquinone oxidoreductase that uses light energy to abstract electrons from H(2)O, generating O(2) and a proton gradient subsequently used for ATP formation. It consists of a core antenna complex that captures photons, and an electron transfer chain that converts photonic excitation into a charge separation. This subunit is found at the monomer-monomer interface and is required for correct PSII assembly and/or dimerization. This chain is Photosystem II reaction center protein L, found in Synechococcus sp. (strain RCC307).